The primary structure comprises 116 residues: Small ribosomal subunit protein bS16 (116 aa).

Belongs to the bacterial ribosomal protein bS16 family.

In Chlamydia trachomatis serovar L2 (strain ATCC VR-902B / DSM 19102 / 434/Bu), this protein is Small ribosomal subunit protein bS16.